Reading from the N-terminus, the 258-residue chain is Indole-3-glycerol phosphate synthase (258 aa).

The protein belongs to the TrpC family.

It catalyses the reaction 1-(2-carboxyphenylamino)-1-deoxy-D-ribulose 5-phosphate + H(+) = (1S,2R)-1-C-(indol-3-yl)glycerol 3-phosphate + CO2 + H2O. It functions in the pathway amino-acid biosynthesis; L-tryptophan biosynthesis; L-tryptophan from chorismate: step 4/5. This Geobacillus sp. (strain WCH70) protein is Indole-3-glycerol phosphate synthase.